Consider the following 293-residue polypeptide: Homoserine kinase (293 aa).

83-93 (PITRGMGSSSA) lines the ATP pocket.

Belongs to the GHMP kinase family. Homoserine kinase subfamily.

It is found in the cytoplasm. The catalysed reaction is L-homoserine + ATP = O-phospho-L-homoserine + ADP + H(+). It functions in the pathway amino-acid biosynthesis; L-threonine biosynthesis; L-threonine from L-aspartate: step 4/5. Its function is as follows. Catalyzes the ATP-dependent phosphorylation of L-homoserine to L-homoserine phosphate. This Helicobacter pylori (strain J99 / ATCC 700824) (Campylobacter pylori J99) protein is Homoserine kinase.